A 690-amino-acid polypeptide reads, in one-letter code: BURP domain-containing protein 14 (690 aa).

The first 26 residues, 1-26, serve as a signal peptide directing secretion; it reads MAPPRHARLVAATIAVLLCHLPRSAA. The segment at 134–163 is disordered; sequence GSSWSKSSSDGDGAAAAAAPAGGGGGGGGG. Residues 135-153 are compositionally biased toward low complexity; it reads SSWSKSSSDGDGAAAAAAP. Gly residues predominate over residues 154 to 163; it reads AGGGGGGGGG. N-linked (GlcNAc...) asparagine glycosylation occurs at N178. Residues 201–211 are compositionally biased toward gly residues; the sequence is SNGGGGGGGGV. The segment at 201 to 232 is disordered; the sequence is SNGGGGGGGGVDSFRRYGKGSQGRNDSFTSYE. 6 N-linked (GlcNAc...) asparagine glycosylation sites follow: N225, N317, N379, N432, N450, and N601. The 213-residue stretch at 477–689 folds into the BURP domain; sequence FFRERDLVAG…FQGDMTWTVA (213 aa).

Expressed in panicles.

This Oryza sativa subsp. japonica (Rice) protein is BURP domain-containing protein 14 (BURP14).